The following is a 120-amino-acid chain: UPF0231 protein CKO_03249 (120 aa).

It belongs to the UPF0231 family.

The polypeptide is UPF0231 protein CKO_03249 (Citrobacter koseri (strain ATCC BAA-895 / CDC 4225-83 / SGSC4696)).